A 67-amino-acid polypeptide reads, in one-letter code: MPKLKTRKAAAKRFEATGSGKKIKRRKAFKNHLLDHKSAERKRRRLSQITLVHERDEKEVRLMLPYL.

Positions 1–11 (MPKLKTRKAAA) are enriched in basic residues. A disordered region spans residues 1–22 (MPKLKTRKAAAKRFEATGSGKK).

Belongs to the bacterial ribosomal protein bL35 family.

The polypeptide is Large ribosomal subunit protein bL35 (Microcystis aeruginosa (strain NIES-843 / IAM M-2473)).